The primary structure comprises 400 residues: Homoserine O-acetyltransferase (400 aa).

The segment at 1–22 (MMNVHPVKGPVATGGERPHEAD) is disordered. An AB hydrolase-1 domain is found at 64–374 (NAILVCHALT…DKGHDAFLLD (311 aa)). Ser-169 acts as the Nucleophile in catalysis. Arg-239 lines the substrate pocket. Catalysis depends on residues Asp-335 and His-368. Asp-369 is a substrate binding site.

Belongs to the AB hydrolase superfamily. MetX family. As to quaternary structure, homodimer.

The protein resides in the cytoplasm. It catalyses the reaction L-homoserine + acetyl-CoA = O-acetyl-L-homoserine + CoA. It functions in the pathway amino-acid biosynthesis; L-methionine biosynthesis via de novo pathway; O-acetyl-L-homoserine from L-homoserine: step 1/1. Functionally, transfers an acetyl group from acetyl-CoA to L-homoserine, forming acetyl-L-homoserine. The sequence is that of Homoserine O-acetyltransferase from Rhodopseudomonas palustris (strain HaA2).